Consider the following 555-residue polypeptide: Solute carrier family 22 member 2 (555 aa).

Residues 1–21 lie on the Cytoplasmic side of the membrane; that stretch reads MSTVDDILEHIGEFHLFQKQT. A helical membrane pass occupies residues 22–42; sequence FFLLALLSGAFTPIYVGIVFL. Topologically, residues 43–150 are extracellular; that stretch reads GFTPDHHCWS…LVCAHSWMLD (108 aa). Asparagine 71 is a glycosylation site (N-linked (GlcNAc...) asparagine). Residues 151–171 traverse the membrane as a helical segment; sequence LFQSVVNVGFFIGAMMIGYLA. Residues 172–177 lie on the Cytoplasmic side of the membrane; the sequence is DRFGRK. The helical transmembrane segment at 178–198 threads the bilayer; sequence FCLLVTILINAISGALMAISP. The Extracellular portion of the chain corresponds to 199 to 210; sequence NYAWMLVFRFLQ. The chain crosses the membrane as a helical span at residues 211 to 231; that stretch reads GLVSKAGWLIGYILITEFVGL. Over 232–238 the chain is Cytoplasmic; it reads GYRRMVG. Residues 239 to 259 form a helical membrane-spanning segment; the sequence is ICYQIAFTVGLLILAGVAYVI. Residues 260 to 263 are Extracellular-facing; sequence PNWR. A helical transmembrane segment spans residues 264 to 284; that stretch reads WLQFAVTLPNFCFLLYFWCIP. Positions 284 to 288 match the Proline-rich sequence motif; that stretch reads PESPR. The Cytoplasmic portion of the chain corresponds to 285–348; that stretch reads ESPRWLISQN…VRTPQIRKHT (64 aa). Residues 349 to 369 form a helical membrane-spanning segment; that stretch reads LILMYNWFTSSVLYQGLIMHM. Residues 370–375 lie on the Extracellular side of the membrane; sequence GLAGDN. The chain crosses the membrane as a helical span at residues 376 to 396; it reads IYLDFFYSALVEFPAAFIIIL. The Cytoplasmic portion of the chain corresponds to 397–404; the sequence is TIDRVGRR. A helical transmembrane segment spans residues 405 to 425; the sequence is YPWAVSNMVAGAACLASVFIP. Residues 426 to 432 are Extracellular-facing; that stretch reads DDLQWLK. Residues 433–453 form a helical membrane-spanning segment; sequence ITIACLGRMGITMAYEMVCLV. Residues 454-464 are Cytoplasmic-facing; sequence NAELYPTYIRN. A helical transmembrane segment spans residues 465 to 485; sequence LGVLVCSSMCDIGGIITPFLV. The Extracellular segment spans residues 486–494; sequence YRLTDIWME. Residues 495 to 515 traverse the membrane as a helical segment; sequence FPLVVFAVVGLVAGALVLLLP. Over 516–555 the chain is Cytoplasmic; sequence ETKGKALPETIEDAENMQRPRKKKEKRIYLQVKQADRPLS.

Belongs to the major facilitator (TC 2.A.1) superfamily. Organic cation transporter (TC 2.A.1.19) family. Post-translationally, tyrosine phosphorylated. In terms of tissue distribution, expressed in the kidney, in the proximal tubules of cortex and of the outer medulla. In brain, highly expressed predominantly in regions located at the brain-cerebrospinal fluid border, in the leptomeninges, in the choroid plexus and in a layer boarding the third ventricle. In brain, also observed in the granular cell layer of the cerebellum and in the granular layer and pyramidal cells of the hippocampus in the CA1-CA3 regions. Expressed in tracheal and bronchial ciliated epithelium in the respiratory tract. Expression is greater in the kidney of male than of female.

It is found in the basolateral cell membrane. Its subcellular location is the basal cell membrane. The protein resides in the apical cell membrane. It catalyses the reaction (R)-noradrenaline(out) = (R)-noradrenaline(in). The enzyme catalyses (R)-adrenaline(out) = (R)-adrenaline(in). It carries out the reaction serotonin(out) = serotonin(in). The catalysed reaction is dopamine(out) = dopamine(in). It catalyses the reaction histamine(out) = histamine(in). The enzyme catalyses thiamine(in) = thiamine(out). It carries out the reaction creatinine(in) = creatinine(out). The catalysed reaction is 1-methylnicotinamide(out) = 1-methylnicotinamide(in). It catalyses the reaction guanidine(out) = guanidine(in). The enzyme catalyses choline(out) = choline(in). It carries out the reaction agmatine(out) = agmatine(in). The catalysed reaction is putrescine(out) = putrescine(in). It catalyses the reaction spermidine(in) = spermidine(out). The enzyme catalyses tyramine(in) = tyramine(out). It carries out the reaction L-histidyl-L-proline diketopiperazine(in) = L-histidyl-L-proline diketopiperazine(out). The catalysed reaction is (R)-salsolinol(in) = (R)-salsolinol(out). It catalyses the reaction N-methyl-(R)-salsolinol(in) = N-methyl-(R)-salsolinol(out). The enzyme catalyses acetylcholine(in) = acetylcholine(out). It carries out the reaction prostaglandin F2alpha(out) = prostaglandin F2alpha(in). The catalysed reaction is prostaglandin E2(out) = prostaglandin E2(in). Its activity is regulated as follows. Tyrosine phosphorylation of the transporter leads to activation of the transport activity. Inhibited by cGMP, most likely through a cGMP-binding protein that interacts with OCT2. In terms of biological role, electrogenic voltage-dependent transporter that mediates the transport of a variety of organic cations such as endogenous bioactive amines, cationic drugs and xenobiotics. Functions as a Na(+)-independent, bidirectional uniporter. Cation cellular uptake or release is driven by the electrochemical potential, i.e. membrane potential and concentration gradient. However, may also engage electroneutral cation exchange when saturating concentrations of cation substrates are reached. Predominantly expressed at the basolateral membrane of hepatocytes and proximal tubules and involved in the uptake and disposition of cationic compounds by hepatic and renal clearance from the blood flow. Implicated in monoamine neurotransmitters uptake such as histamine, dopamine, adrenaline/epinephrine, noradrenaline/norepinephrine, serotonin and tyramine, thereby supporting a physiological role in the central nervous system by regulating interstitial concentrations of neurotransmitters. Also capable of transporting dopaminergic neuromodulators cyclo(his-pro), salsolinol and N-methyl-salsolinol, thereby involved in the maintenance of dopaminergic cell integrity in the central nervous system. Mediates the bidirectional transport of acetylcholine (ACh) at the apical membrane of ciliated cell in airway epithelium, thereby playing a role in luminal release of ACh from bronchial epithelium. Also transports guanidine and endogenous monoamines such as vitamin B1/thiamine, creatinine and N-1-methylnicotinamide (NMN). Mediates the uptake and efflux of quaternary ammonium compound choline. Mediates the bidirectional transport of polyamine agmatine and the uptake of polyamine putrescine. Able to transport non-amine endogenous compounds such as prostaglandin E2 (PGE2) and prostaglandin F2-alpha (PGF2-alpha). Also involved in the uptake of xenobiotic 4-(4-(dimethylamino)styryl)-N-methylpyridinium (ASP). May contribute to regulate the transport of organic compounds in testis across the blood-testis-barrier. This chain is Solute carrier family 22 member 2, found in Rattus norvegicus (Rat).